The primary structure comprises 902 residues: Cytosolic 10-formyltetrahydrofolate dehydrogenase (902 aa).

Residues Met1 to Ala310 are hydrolase domain. Ser9 carries the post-translational modification Phosphoserine. Lys38 carries the post-translational modification N6-succinyllysine. Gln88–Ile90 is a binding site for (6R)-10-formyltetrahydrofolate. Catalysis depends on His106, which acts as the Proton donor. Asp142 is a (6R)-10-formyltetrahydrofolate binding site. A Carrier domain is found at Glu318–Leu395. O-(pantetheine 4'-phosphoryl)serine is present on Ser354. An aldehyde dehydrogenase domain region spans residues Thr417 to Tyr902. Residues Ile571–Trp573 and Lys597–Gln600 each bind NADP(+). Residues Ser629 and Ser631 each carry the phosphoserine modification. Residues Gly630 to Gln635 and Gly650 to Ser651 contribute to the NADP(+) site. Lys660 carries the post-translational modification N6-succinyllysine. The active-site Proton acceptor is the Glu673. Glu673–Leu674 provides a ligand contact to NADP(+). The active-site Proton donor is Cys707. Residue Lys757 participates in NADP(+) binding. An N6-succinyllysine modification is found at Lys767. Glu804–Phe806 is an NADP(+) binding site. Ser825 is modified (phosphoserine). Lys882 carries the post-translational modification N6-acetyllysine.

This sequence in the N-terminal section; belongs to the GART family. It in the C-terminal section; belongs to the aldehyde dehydrogenase family. ALDH1L subfamily. In terms of assembly, homotetramer. Phosphopantetheinylation at Ser-354 by AASDHPPT is required for the formyltetrahydrofolate dehydrogenase activity.

It is found in the cytoplasm. The protein localises to the cytosol. The catalysed reaction is (6R)-10-formyltetrahydrofolate + NADP(+) + H2O = (6S)-5,6,7,8-tetrahydrofolate + CO2 + NADPH + H(+). In terms of biological role, cytosolic 10-formyltetrahydrofolate dehydrogenase that catalyzes the NADP(+)-dependent conversion of 10-formyltetrahydrofolate to tetrahydrofolate and carbon dioxide. May also have an NADP(+)-dependent aldehyde dehydrogenase activity towards formaldehyde, acetaldehyde, propionaldehyde, and benzaldehyde. This is Cytosolic 10-formyltetrahydrofolate dehydrogenase from Pongo abelii (Sumatran orangutan).